Consider the following 158-residue polypeptide: NADH-quinone oxidoreductase subunit B (158 aa).

C37, C38, C102, and C132 together coordinate [4Fe-4S] cluster.

Belongs to the complex I 20 kDa subunit family. NDH-1 is composed of 14 different subunits. Subunits NuoB, C, D, E, F, and G constitute the peripheral sector of the complex. It depends on [4Fe-4S] cluster as a cofactor.

The protein localises to the cell inner membrane. It carries out the reaction a quinone + NADH + 5 H(+)(in) = a quinol + NAD(+) + 4 H(+)(out). Functionally, NDH-1 shuttles electrons from NADH, via FMN and iron-sulfur (Fe-S) centers, to quinones in the respiratory chain. The immediate electron acceptor for the enzyme in this species is believed to be ubiquinone. Couples the redox reaction to proton translocation (for every two electrons transferred, four hydrogen ions are translocated across the cytoplasmic membrane), and thus conserves the redox energy in a proton gradient. This Thioalkalivibrio sulfidiphilus (strain HL-EbGR7) protein is NADH-quinone oxidoreductase subunit B.